The sequence spans 298 residues: N-acetylmuramic acid 6-phosphate etherase (298 aa).

The region spanning 55 to 218 (IHAQVSGGGR…STGLMIKSGK (164 aa)) is the SIS domain. Glu-83 serves as the catalytic Proton donor. Glu-114 is a catalytic residue.

The protein belongs to the GCKR-like family. MurNAc-6-P etherase subfamily. As to quaternary structure, homodimer.

The enzyme catalyses N-acetyl-D-muramate 6-phosphate + H2O = N-acetyl-D-glucosamine 6-phosphate + (R)-lactate. Its pathway is amino-sugar metabolism; 1,6-anhydro-N-acetylmuramate degradation. It participates in amino-sugar metabolism; N-acetylmuramate degradation. The protein operates within cell wall biogenesis; peptidoglycan recycling. In terms of biological role, specifically catalyzes the cleavage of the D-lactyl ether substituent of MurNAc 6-phosphate, producing GlcNAc 6-phosphate and D-lactate. Together with AnmK, is also required for the utilization of anhydro-N-acetylmuramic acid (anhMurNAc) either imported from the medium or derived from its own cell wall murein, and thus plays a role in cell wall recycling. The chain is N-acetylmuramic acid 6-phosphate etherase from Shigella flexneri serotype 5b (strain 8401).